The sequence spans 212 residues: Thymidylate kinase (212 aa).

Residues 16-21 (RAGKTT), Arg97, Arg182, and Lys192 each bind ATP.

Belongs to the thymidylate kinase family. The cofactor is Mg(2+).

The enzyme catalyses dTMP + ATP = dTDP + ADP. The protein operates within pyrimidine metabolism; dTTP biosynthesis. In terms of biological role, catalyzes the phosphorylation of thymidine monophosphate (dTMP) to thymidine diphosphate (dTDP), the immediate precursor for the DNA building block dTTP, with ATP as the preferred phosphoryl donor in the presence of Mg(2+). This is Thymidylate kinase (dtymk) from Danio rerio (Zebrafish).